Here is a 350-residue protein sequence, read N- to C-terminus: Casein kinase II subunit alpha' (350 aa).

Residue tyrosine 13 is modified to Phosphotyrosine. Residues serine 18 and serine 21 each carry the phosphoserine modification. Residues 40 to 325 (YQLVRKLGRG…AKEAMEHPYF (286 aa)) form the Protein kinase domain. ATP-binding positions include 46–54 (LGRGKYSEV) and lysine 69. Position 97 is an N6-acetyllysine (lysine 97). Aspartate 157 functions as the Proton acceptor in the catalytic mechanism. A Phosphoserine modification is found at serine 288.

Belongs to the protein kinase superfamily. Ser/Thr protein kinase family. CK2 subfamily. Heterotetramer composed of two catalytic subunits (alpha chain and/or alpha' chain) and two regulatory subunits (beta chains). The tetramer can exist as a combination of 2 alpha/2 beta, 2 alpha'/2 beta or 1 alpha/1 alpha'/2 beta subunits. Also part of a CK2-SPT16-SSRP1 complex composed of SSRP1, SUPT16H, CSNK2A1, CSNK2A2 and CSNK2B, which forms following UV irradiation. Interacts with RNPS1. Interacts with CSNK2A2IP (via C-terminus). Interacts with SIRT6; preventing CSNK2A2 localization to the nucleus. Interacts with HIRIP3. Highly expressed in brain, testis and mature epididymal spermatozoa. Weakly expressed in kidney, liver, lung, spleen and thymus (at protein level).

The protein resides in the nucleus. Its subcellular location is the cytoplasm. The catalysed reaction is L-seryl-[protein] + ATP = O-phospho-L-seryl-[protein] + ADP + H(+). It carries out the reaction L-threonyl-[protein] + ATP = O-phospho-L-threonyl-[protein] + ADP + H(+). Its activity is regulated as follows. Constitutively active protein kinase whose activity is not directly affected by phosphorylation. Seems to be regulated by level of expression and localization. In terms of biological role, catalytic subunit of a constitutively active serine/threonine-protein kinase complex that phosphorylates a large number of substrates containing acidic residues C-terminal to the phosphorylated serine or threonine. Regulates numerous cellular processes, such as cell cycle progression, apoptosis and transcription, as well as viral infection. May act as a regulatory node which integrates and coordinates numerous signals leading to an appropriate cellular response. During mitosis, functions as a component of the p53/TP53-dependent spindle assembly checkpoint (SAC) that maintains cyclin-B-CDK1 activity and G2 arrest in response to spindle damage. Also required for p53/TP53-mediated apoptosis, phosphorylating 'Ser-392' of p53/TP53 following UV irradiation. Phosphorylates a number of DNA repair proteins in response to DNA damage, such as MDC1, RAD9A, RAD51 and HTATSF1, promoting their recruitment to DNA damage sites. Can also negatively regulate apoptosis. Phosphorylates the caspases CASP9 and CASP2 and the apoptotic regulator NOL3. Phosphorylation protects CASP9 from cleavage and activation by CASP8, and inhibits the dimerization of CASP2 and activation of CASP8. Regulates transcription by direct phosphorylation of RNA polymerases I, II, III and IV. Also phosphorylates and regulates numerous transcription factors including NF-kappa-B, STAT1, CREB1, IRF1, IRF2, ATF1, SRF, MAX, JUN, FOS, MYC and MYB. Phosphorylates Hsp90 and its co-chaperones FKBP4 and CDC37, which is essential for chaperone function. Regulates Wnt signaling by phosphorylating CTNNB1 and the transcription factor LEF1. Acts as an ectokinase that phosphorylates several extracellular proteins. May phosphorylate histone H2A on 'Ser-1'. This Mus musculus (Mouse) protein is Casein kinase II subunit alpha' (Csnk2a2).